The primary structure comprises 143 residues: Sirohydrochlorin cobaltochelatase (143 aa).

His-18 acts as the Proton acceptor in catalysis. Co(2+) is bound at residue His-18. Residue His-18 participates in Ni(2+) binding. Residues Arg-53 and 78 to 83 (LAHGVH) each bind substrate. His-83 is a binding site for Co(2+). Residue His-83 participates in Ni(2+) binding.

It belongs to the CbiX family. CbiXS subfamily. As to quaternary structure, homotetramer; dimer of dimers.

The catalysed reaction is Co-sirohydrochlorin + 2 H(+) = sirohydrochlorin + Co(2+). It carries out the reaction Ni-sirohydrochlorin + 2 H(+) = sirohydrochlorin + Ni(2+). It functions in the pathway cofactor biosynthesis; adenosylcobalamin biosynthesis; cob(II)yrinate a,c-diamide from sirohydrochlorin (anaerobic route): step 1/10. In terms of biological role, catalyzes the insertion of Co(2+) into sirohydrochlorin as part of the anaerobic pathway to cobalamin biosynthesis. Involved in the biosynthesis of the unique nickel-containing tetrapyrrole coenzyme F430, the prosthetic group of methyl-coenzyme M reductase (MCR), which plays a key role in methanogenesis and anaerobic methane oxidation (Potential). Catalyzes the insertion of Ni(2+) into sirohydrochlorin to yield Ni-sirohydrochlorin (Potential). This chain is Sirohydrochlorin cobaltochelatase, found in Methanothermobacter thermautotrophicus (strain ATCC 29096 / DSM 1053 / JCM 10044 / NBRC 100330 / Delta H) (Methanobacterium thermoautotrophicum).